A 151-amino-acid polypeptide reads, in one-letter code: Protein ECM12 (151 aa).

N-linked (GlcNAc...) asparagine glycosylation is present at Asn2. Transmembrane regions (helical) follow at residues Leu17–Phe37 and Ala51–Phe71. N-linked (GlcNAc...) asparagine glycosylation is found at Asn132 and Asn137.

The protein localises to the membrane. Its function is as follows. May be involved in cell wall organization and biogenesis. The sequence is that of Protein ECM12 (ECM12) from Saccharomyces cerevisiae (strain ATCC 204508 / S288c) (Baker's yeast).